Here is a 419-residue protein sequence, read N- to C-terminus: Probable G-protein coupled receptor 63 (419 aa).

Residues 1–81 (MVFSAVLTAF…AFKSLNLPLQ (81 aa)) are Extracellular-facing. N-linked (GlcNAc...) asparagine glycosylation is found at asparagine 16, asparagine 28, and asparagine 62. A helical transmembrane segment spans residues 82–104 (ITLSAIMIFILFVSFLGNLVVCL). Residues 105–115 (MVYQKAAMRSA) are Cytoplasmic-facing. The helical transmembrane segment at 116-138 (INILLASLAFADMLLAVLNMPFA) threads the bilayer. At 139-157 (LVTILTTRWIFGKFFCRVS) the chain is on the extracellular side. A helical transmembrane segment spans residues 158–177 (AMFFWLFVIEGVAILLIISI). The Cytoplasmic portion of the chain corresponds to 178 to 196 (DRFLIIVQRQDKLNPYRAK). A helical membrane pass occupies residues 197–216 (VLIAVSWATSFCVAFPLAVG). At 217–240 (NPDLQIPSRAPQCVFGYTTNPGYQ) the chain is on the extracellular side. Residues 241 to 263 (AYVILISLISFFIPFLVILYSFM) traverse the membrane as a helical segment. Over 264–315 (GILNTLRHNALRIHSYPEGICLSQASKLGLMSLQRPFQMSIDMGFKTRAFTT) the chain is Cytoplasmic. A helical membrane pass occupies residues 316–338 (ILILFAVFIVCWAPFTTYSLVAT). The Extracellular segment spans residues 339–352 (FSKHFYYQHNFFEI). The chain crosses the membrane as a helical span at residues 353 to 375 (STWLLWLCYLKSALNPLIYYWRI). Residues 376–419 (KKFHDACLDMMPKSFKFLPQLPGHTKRRIRPSAVYVCGEHRTVV) lie on the Cytoplasmic side of the membrane.

It belongs to the G-protein coupled receptor 1 family. As to expression, expressed in brain; detected in the frontal cortex, with lower levels in the thalamus, caudate, hypothalamus and midbrain.

It localises to the cell membrane. In terms of biological role, orphan receptor. May play a role in brain function. The polypeptide is Probable G-protein coupled receptor 63 (GPR63) (Homo sapiens (Human)).